The primary structure comprises 341 residues: Glyceraldehyde-3-phosphate dehydrogenase (341 aa).

Residues 11-12 and Gly-109 contribute to the NAD(+) site; that span reads TI. Position 138–140 (138–140) interacts with D-glyceraldehyde 3-phosphate; it reads SCN. Cys-139 (nucleophile) is an active-site residue. Arg-167 is an NAD(+) binding site. Residues Thr-169 and 192 to 193 each bind D-glyceraldehyde 3-phosphate; that span reads HA. NAD(+) is bound at residue Gln-299.

The protein belongs to the glyceraldehyde-3-phosphate dehydrogenase family. In terms of assembly, homotetramer.

It localises to the cytoplasm. It carries out the reaction D-glyceraldehyde 3-phosphate + phosphate + NADP(+) = (2R)-3-phospho-glyceroyl phosphate + NADPH + H(+). It catalyses the reaction D-glyceraldehyde 3-phosphate + phosphate + NAD(+) = (2R)-3-phospho-glyceroyl phosphate + NADH + H(+). It functions in the pathway carbohydrate degradation; glycolysis; pyruvate from D-glyceraldehyde 3-phosphate: step 1/5. The sequence is that of Glyceraldehyde-3-phosphate dehydrogenase from Picrophilus torridus (strain ATCC 700027 / DSM 9790 / JCM 10055 / NBRC 100828 / KAW 2/3).